The primary structure comprises 288 residues: Bifunctional protein FolD (288 aa).

NADP(+) contacts are provided by residues 164–166 (GRS), Ser-193, and Ile-234.

It belongs to the tetrahydrofolate dehydrogenase/cyclohydrolase family. As to quaternary structure, homodimer.

The catalysed reaction is (6R)-5,10-methylene-5,6,7,8-tetrahydrofolate + NADP(+) = (6R)-5,10-methenyltetrahydrofolate + NADPH. It catalyses the reaction (6R)-5,10-methenyltetrahydrofolate + H2O = (6R)-10-formyltetrahydrofolate + H(+). It functions in the pathway one-carbon metabolism; tetrahydrofolate interconversion. In terms of biological role, catalyzes the oxidation of 5,10-methylenetetrahydrofolate to 5,10-methenyltetrahydrofolate and then the hydrolysis of 5,10-methenyltetrahydrofolate to 10-formyltetrahydrofolate. This chain is Bifunctional protein FolD, found in Nitratidesulfovibrio vulgaris (strain DSM 19637 / Miyazaki F) (Desulfovibrio vulgaris).